A 725-amino-acid chain; its full sequence is NAD(+) hydrolase SARM1 (725 aa).

A mitochondrion-targeting transit peptide spans 1–27; that stretch reads MVLTILFSAYKLCRFFAMSSPRPGAER. One copy of the ARM 1 repeat lies at 60–100; the sequence is EVQGALERALPELQQALSALKQAGGGRAVGAGLAEVFQLVE. Residues W103, R110, 149 to 158, and 191 to 194 each bind NAD(+); these read EQILVAENRR and HMFK. 7 ARM repeats span residues 114–153, 155–194, 197–236, 238–281, 282–315, 316–355, and 360–403; these read QGLC…QILV, ENRR…HMFK, EETC…NCAM, GGQA…LATN, KEVE…CLVD, ASDT…AEAV, and KNRN…EEVP. SAM domains are found at residues 413-477 and 483-549; these read WKEA…LKTF and CDRS…MLHS. Phosphoserine is present on residues S549 and S559. In terms of domain architecture, TIR spans 561–704; it reads DVPDVFISYR…KIIRFLQGRS (144 aa). NAD(+) contacts are provided by residues 570–571 and E600; that span reads RR. Residue E643 is part of the active site. The disordered stretch occupies residues 705-725; it reads SRDSSAGSDTSLEGAAPMGPT.

The protein belongs to the SARM1 family. As to quaternary structure, homooctamer; forms an octameric ring via SAM domains. Interacts with TICAM1/TRIF and thereby interferes with TICAM1/TRIF function. Interacts with MAPK10/JNK3 and SDC2 (via cytoplasmic domain). Post-translationally, phosphorylation at Ser-549 by JNK kinases (MAPK8, MAPK9 and /or MAPK10) enhance the NAD(+) hydrolase (NADase) activity. Phosphorylation at Ser-549 and subsequent activation takes place in response to oxidative stress conditions and inhibits mitochondrial respiration. As to expression, highest expression seen in the spleen and the brain, followed by lung, kidney, liver and other tissues.

The protein localises to the cytoplasm. It is found in the cell projection. The protein resides in the axon. It localises to the dendrite. Its subcellular location is the synapse. The protein localises to the mitochondrion. It carries out the reaction NAD(+) + H2O = ADP-D-ribose + nicotinamide + H(+). The catalysed reaction is NAD(+) = cyclic ADP-beta-D-ribose + nicotinamide + H(+). It catalyses the reaction NADP(+) + H2O = ADP-D-ribose 2'-phosphate + nicotinamide + H(+). Its activity is regulated as follows. Autoinhibited: in the inactive state, the enzymatic TIR domain is held apart by the autoinhibiting ARM repeats. NAD(+)-binding to ARM repeats maintains an inactive state by promoting interaction between ARM repeats and the TIR domain, thereby facilitating inhibition of the enzymatic TIR domain. Following activation, possibly by nicotinamide mononucleotide (NMN), auto-inhibitory interactions are released, allowing self-association of the TIR domains and subsequent activation of the NAD(+) hydrolase (NADase) activity. Self-association of TIR domains is facilitated by the octamer of SAM domains. In terms of biological role, NAD(+) hydrolase, which plays a key role in axonal degeneration following injury by regulating NAD(+) metabolism. Acts as a negative regulator of MYD88- and TRIF-dependent toll-like receptor signaling pathway by promoting Wallerian degeneration, an injury-induced form of programmed subcellular death which involves degeneration of an axon distal to the injury site. Wallerian degeneration is triggered by NAD(+) depletion: in response to injury, SARM1 is activated and catalyzes cleavage of NAD(+) into ADP-D-ribose (ADPR), cyclic ADPR (cADPR) and nicotinamide; NAD(+) cleavage promoting cytoskeletal degradation and axon destruction. Also able to hydrolyze NADP(+), but not other NAD(+)-related molecules. Can activate neuronal cell death in response to stress. Regulates dendritic arborization through the MAPK4-JNK pathway. Involved in innate immune response: inhibits both TICAM1/TRIF- and MYD88-dependent activation of JUN/AP-1, TRIF-dependent activation of NF-kappa-B and IRF3, and the phosphorylation of MAPK14/p38. This chain is NAD(+) hydrolase SARM1, found in Sus scrofa (Pig).